The sequence spans 275 residues: Fructose-2,6-bisphosphatase TIGAR (275 aa).

H11 serves as the catalytic Tele-phosphohistidine intermediate. E89 serves as the catalytic Proton donor/acceptor.

It belongs to the phosphoglycerate mutase family.

The protein resides in the cytoplasm. It is found in the nucleus. The protein localises to the mitochondrion. It carries out the reaction beta-D-fructose 2,6-bisphosphate + H2O = beta-D-fructose 6-phosphate + phosphate. Fructose-bisphosphatase hydrolyzing fructose-2,6-bisphosphate as well as fructose-1,6-bisphosphate. Acts as a negative regulator of glycolysis by lowering intracellular levels of fructose-2,6-bisphosphate in a p53/TP53-dependent manner, resulting in the pentose phosphate pathway (PPP) activation and NADPH production. Contributes to the generation of reduced glutathione to cause a decrease in intracellular reactive oxygen species (ROS) content, correlating with its ability to protect cells from oxidative or metabolic stress-induced cell death. May play a role in mitophagy inhibition. The chain is Fructose-2,6-bisphosphatase TIGAR from Xenopus laevis (African clawed frog).